The primary structure comprises 135 residues: ATP synthase epsilon chain (135 aa).

This sequence belongs to the ATPase epsilon chain family. F-type ATPases have 2 components, CF(1) - the catalytic core - and CF(0) - the membrane proton channel. CF(1) has five subunits: alpha(3), beta(3), gamma(1), delta(1), epsilon(1). CF(0) has three main subunits: a, b and c.

The protein resides in the cell inner membrane. Produces ATP from ADP in the presence of a proton gradient across the membrane. The protein is ATP synthase epsilon chain of Desulforapulum autotrophicum (strain ATCC 43914 / DSM 3382 / VKM B-1955 / HRM2) (Desulfobacterium autotrophicum).